We begin with the raw amino-acid sequence, 98 residues long: Small ribosomal subunit protein eS24 (98 aa).

This sequence belongs to the eukaryotic ribosomal protein eS24 family.

This is Small ribosomal subunit protein eS24 from Thermococcus onnurineus (strain NA1).